Here is a 215-residue protein sequence, read N- to C-terminus: Probable phosphoglycerate mutase GpmB (215 aa).

Residues Arg8–Asn15, Gln21–Gly22, Arg58, Arg60, Glu82–Met85, Arg104–Arg105, and Gly151–Ile152 contribute to the substrate site. His9 serves as the catalytic Tele-phosphohistidine intermediate. Glu82 acts as the Proton donor/acceptor in catalysis.

Belongs to the phosphoglycerate mutase family. GpmB subfamily.

The catalysed reaction is (2R)-2-phosphoglycerate = (2R)-3-phosphoglycerate. Its pathway is carbohydrate degradation; glycolysis; pyruvate from D-glyceraldehyde 3-phosphate: step 3/5. The polypeptide is Probable phosphoglycerate mutase GpmB (Shigella boydii serotype 18 (strain CDC 3083-94 / BS512)).